The chain runs to 82 residues: Small ribosomal subunit protein bS16 (82 aa).

Belongs to the bacterial ribosomal protein bS16 family.

The protein is Small ribosomal subunit protein bS16 of Vibrio campbellii (strain ATCC BAA-1116).